A 394-amino-acid chain; its full sequence is Elongation factor Tu 1 (394 aa).

Residues 10–204 (KPHVNVGTIG…FLDSYIPEPE (195 aa)) form the tr-type G domain. The G1 stretch occupies residues 19-26 (GHVDHGKT). 19–26 (GHVDHGKT) contributes to the GTP binding site. Thr26 is a Mg(2+) binding site. Positions 60–64 (GITIN) are G2. Residues 81-84 (DCPG) are G3. GTP-binding positions include 81–85 (DCPGH) and 136–139 (NKCD). The G4 stretch occupies residues 136–139 (NKCD). The segment at 174-176 (SAL) is G5.

This sequence belongs to the TRAFAC class translation factor GTPase superfamily. Classic translation factor GTPase family. EF-Tu/EF-1A subfamily. In terms of assembly, monomer.

The protein localises to the cytoplasm. It catalyses the reaction GTP + H2O = GDP + phosphate + H(+). Its function is as follows. GTP hydrolase that promotes the GTP-dependent binding of aminoacyl-tRNA to the A-site of ribosomes during protein biosynthesis. The polypeptide is Elongation factor Tu 1 (Shigella sonnei (strain Ss046)).